A 469-amino-acid chain; its full sequence is MSALLRDADLNDFISPGLACVKPAQPQKVEKKPSFEVEVGIESSEPEKVSISLQDCLACAGCITSSEEILLSKQSHKVFLEKWSELEELDERSLAVSISPQCRLSLADYYSMCLADLDRCFQNFMKTKFNAKYVVGTQFGRSISISRINATLKDRVPENEGPLLCSVCPGFVLYAEKTKPELIPHMLDVKSPQQITGNLLKQADPTCYHLSIMPCFDKKLEASREECEKEVDCVITPKEFVAMLGDLSIDFKSYMTEYDSSKELCPSGWDYKLHWLSNEGSSSGGYAYQYLLSLQSSNPESDIITIEGKNSDVTEYRLVSKSKGVIASSSEVYGFRNIQNLVRKLSQSASVKKRGIKVKRRGQSVLKSGETSEKTTKVLTADPAKTDFVEVMACPSGCINGGGLLNEEKNANRRKQLAQDLSLAYTKVHSVNIPDIVHAYDDKSNDFKYNLRVIEPSTSSDVVAVGNTW.

[4Fe-4S] cluster is bound by residues Cys20, Cys56, Cys59, Cys62, Cys168, Cys215, Cys394, and Cys398.

This sequence belongs to the NARF family.

Component of the cytosolic Fe/S protein assembly machinery. Required for maturation of extramitochondrial Fe/S proteins. May play a role in the transfer of pre-assembled Fe/S clusters to target apoproteins. The protein is Cytosolic Fe-S cluster assembly factor NAR1 (NAR1) of Kluyveromyces lactis (strain ATCC 8585 / CBS 2359 / DSM 70799 / NBRC 1267 / NRRL Y-1140 / WM37) (Yeast).